A 1335-amino-acid chain; its full sequence is Membrane-associated phosphatidylinositol transfer protein 2 (1335 aa).

Disordered stretches follow at residues 32 to 51 (ETHG…YTDG) and 262 to 341 (EEGP…SEEE). The span at 275–286 (KDQASGTTSDPG) shows a compositional bias: polar residues. A compositionally biased stretch (low complexity) spans 299–319 (KQWSTSSKSSRSSKRGASPSR). S334, S338, S365, and S586 each carry phosphoserine. Positions 606 to 657 (HCSGGSGGGGSGGSSLESSRHLSRSNIDIPRSNGTEDSRRQLPRKRSDSSTY) are disordered. Over residues 609 to 618 (GGSGGGGSGG) the composition is skewed to gly residues. S630 carries the phosphoserine modification. Over residues 639-653 (GTEDSRRQLPRKRSD) the composition is skewed to basic and acidic residues. S686, S687, and S688 each carry phosphoserine. One can recognise a DDHD domain in the interval 701–949 (FDFEIADLFL…VSFLLRQVMR (249 aa)). R814 is subject to Omega-N-methylarginine. The interval 861–880 (ALPPPSPTTQGPRARARQVS) is disordered. At S1263 the chain carries Phosphoserine. Residues 1282–1313 (TISAQPSGPSHRHDRTQTQMDSEQRGQRSMSV) are disordered. Polar residues predominate over residues 1298-1313 (QTQMDSEQRGQRSMSV).

It belongs to the PtdIns transfer protein family. PI transfer class IIA subfamily. Interacts with CPNE4 (via VWFA domain). Interacts with PTK2B via its C-terminus. Detected in retina and in the dentate gyrus of the cerebellum.

It is found in the endomembrane system. The protein localises to the cytoplasm. Its subcellular location is the cytoskeleton. In terms of biological role, catalyzes the transfer of phosphatidylinositol and phosphatidylcholine between membranes (in vitro). Binds calcium ions. The polypeptide is Membrane-associated phosphatidylinositol transfer protein 2 (Pitpnm2) (Mus musculus (Mouse)).